A 418-amino-acid chain; its full sequence is Nuclear hormone receptor 114 (418 aa).

A DNA-binding region (nuclear receptor) is located at residues 12-87 (DHVCLVCQDF…VGMDRNALQQ (76 aa)). 2 consecutive NR C4-type zinc fingers follow at residues 15–35 (CLVC…CVGC) and 51–70 (CQFE…CRYC). The tract at residues 89–130 (RDPIGYTKRTRRPKKELKTTSDCSSDEGASTPPSVSPLQLSP) is disordered. Residues 170-409 (PIRSLHEALC…AFARQLFFGD (240 aa)) form the NR LBD domain. The tract at residues 398-409 (FSAFARQLFFGD) is AF-2.

It belongs to the nuclear hormone receptor family. As to expression, expressed in germ and intestinal cells and at low levels in the hypodermis.

It is found in the nucleus. Probable transcription factor which may have a role in detoxifying dietary metabolites arising from bacterial tryptophan metabolism. Required for fertility and involved in proper postembryonic germline development, especially germline stem cell (GSC) proliferation. Required for activation of the methionine/S-adenosylmethionine (Met/SAM) cycle in response to low levels of SAM. The sequence is that of Nuclear hormone receptor 114 from Caenorhabditis elegans.